Consider the following 104-residue polypeptide: PTS system lactose-specific EIIA component (104 aa).

The region spanning 4-102 is the PTS EIIA type-3 domain; sequence EEATLLGFEI…MKHLIELYKR (99 aa). H78 (tele-phosphohistidine intermediate) is an active-site residue. The residue at position 78 (H78) is a Phosphohistidine; by HPr. D81 is a Mg(2+) binding site.

As to quaternary structure, homotrimer. Mg(2+) serves as cofactor.

It is found in the cytoplasm. The phosphoenolpyruvate-dependent sugar phosphotransferase system (sugar PTS), a major carbohydrate active transport system, catalyzes the phosphorylation of incoming sugar substrates concomitantly with their translocation across the cell membrane. The enzyme II LacEF PTS system is involved in lactose transport. This Streptococcus mutans serotype c (strain ATCC 700610 / UA159) protein is PTS system lactose-specific EIIA component.